Consider the following 303-residue polypeptide: Putative ring-cleaving dioxygenase MhqE (303 aa).

2 VOC domains span residues 5 to 129 and 150 to 266; these read GLHH…IMED and GMKG…IATD. Fe cation is bound by residues His8, His215, and Glu262.

Belongs to the extradiol ring-cleavage dioxygenase family. It depends on Fe(2+) as a cofactor.

The protein localises to the cytoplasm. Functionally, putative ring-cleavage dioxygenase that may contribute to the degradation of aromatic compounds. The polypeptide is Putative ring-cleaving dioxygenase MhqE (mhqE) (Bacillus subtilis (strain 168)).